The sequence spans 536 residues: Prolyl 3-hydroxylase sudestada1 (536 aa).

A disordered region spans residues 1-35 (METSSSSPVKPRRKDKDEDGRAEQEDSADQVGEPH). The segment covering 14–24 (KDKDEDGRAEQ) has biased composition (basic and acidic residues). Positions 165–275 (KLDYVSASCS…RLTINGWFHG (111 aa)) constitute a Fe2OG dioxygenase domain. Fe cation is bound by residues histidine 185 and aspartate 187. 2-oxoglutarate is bound at residue tyrosine 199. Histidine 254 contacts Fe cation. Arginine 266 contacts 2-oxoglutarate. Residues 467-486 (PTAKAPTDGRRSDYDDEEED) are disordered.

It belongs to the TPA1 family. In terms of assembly, monomer. Requires Fe(2+) as cofactor. The cofactor is L-ascorbate. In terms of tissue distribution, in third-instar larval tissues,highly expressed in the fat body, with significant expression in other organs including the brain, salivary glands, imaginal disks and gut.

Its subcellular location is the nucleus. It localises to the cytoplasm. The catalysed reaction is [ribosomal protein uS12]-L-proline + 2-oxoglutarate + O2 = [ribosomal protein uS12]-(3S)-3-hydroxy-L-proline + succinate + CO2. Prolyl 3-hydroxylase that catalyzes 3-hydroxylation of 'Pro-62' of small ribosomal subunit uS12 (RpS23), thereby regulating protein translation termination efficiency. The protein is Prolyl 3-hydroxylase sudestada1 (sud1) of Drosophila melanogaster (Fruit fly).